Consider the following 205-residue polypeptide: Putative lipoprotein LppC (205 aa).

The first 27 residues, 1–27, serve as a signal peptide directing secretion; sequence MESPMTSTLHRTPLATAGLALVVALGG. The N-palmitoyl cysteine moiety is linked to residue cysteine 28. Cysteine 28 carries S-diacylglycerol cysteine lipidation. Residues 126–145 are disordered; the sequence is GSTADGQTPAGGHSVPNSGG.

Belongs to the UPF0098 family.

It localises to the cell membrane. The polypeptide is Putative lipoprotein LppC (lppC) (Mycobacterium tuberculosis (strain CDC 1551 / Oshkosh)).